The following is a 475-amino-acid chain: Ribulose bisphosphate carboxylase large chain (475 aa).

The propeptide occupies 1–2 (MS). P3 is subject to N-acetylproline. An N6,N6,N6-trimethyllysine modification is found at K14. Substrate is bound by residues N123 and T173. Catalysis depends on K175, which acts as the Proton acceptor. K177 provides a ligand contact to substrate. The Mg(2+) site is built by K201, D203, and E204. K201 is modified (N6-carboxylysine). H294 (proton acceptor) is an active-site residue. Residues R295, H327, and S379 each contribute to the substrate site.

It belongs to the RuBisCO large chain family. Type I subfamily. As to quaternary structure, heterohexadecamer of 8 large chains and 8 small chains; disulfide-linked. The disulfide link is formed within the large subunit homodimers. Requires Mg(2+) as cofactor. The disulfide bond which can form in the large chain dimeric partners within the hexadecamer appears to be associated with oxidative stress and protein turnover.

It localises to the plastid. It is found in the chloroplast. The enzyme catalyses 2 (2R)-3-phosphoglycerate + 2 H(+) = D-ribulose 1,5-bisphosphate + CO2 + H2O. It carries out the reaction D-ribulose 1,5-bisphosphate + O2 = 2-phosphoglycolate + (2R)-3-phosphoglycerate + 2 H(+). Functionally, ruBisCO catalyzes two reactions: the carboxylation of D-ribulose 1,5-bisphosphate, the primary event in carbon dioxide fixation, as well as the oxidative fragmentation of the pentose substrate in the photorespiration process. Both reactions occur simultaneously and in competition at the same active site. This Physcomitrium patens (Spreading-leaved earth moss) protein is Ribulose bisphosphate carboxylase large chain.